A 514-amino-acid chain; its full sequence is ATP synthase subunit alpha (514 aa).

170-177 contributes to the ATP binding site; sequence GDRQTGKT.

This sequence belongs to the ATPase alpha/beta chains family. In terms of assembly, F-type ATPases have 2 components, CF(1) - the catalytic core - and CF(0) - the membrane proton channel. CF(1) has five subunits: alpha(3), beta(3), gamma(1), delta(1), epsilon(1). CF(0) has three main subunits: a(1), b(2) and c(9-12). The alpha and beta chains form an alternating ring which encloses part of the gamma chain. CF(1) is attached to CF(0) by a central stalk formed by the gamma and epsilon chains, while a peripheral stalk is formed by the delta and b chains.

Its subcellular location is the cell inner membrane. The enzyme catalyses ATP + H2O + 4 H(+)(in) = ADP + phosphate + 5 H(+)(out). Produces ATP from ADP in the presence of a proton gradient across the membrane. The alpha chain is a regulatory subunit. The polypeptide is ATP synthase subunit alpha (Psychrobacter arcticus (strain DSM 17307 / VKM B-2377 / 273-4)).